Here is a 365-residue protein sequence, read N- to C-terminus: Mitogen-activated protein kinase 13 (365 aa).

One can recognise a Protein kinase domain in the interval 25–308 (YVSPTHVGSG…AAQALTHPFF (284 aa)). 31 to 39 (VGSGAYGSV) contributes to the ATP binding site. Ser-47 is subject to Phosphoserine. Lys-54 lines the ATP pocket. Asp-150 functions as the Proton acceptor in the catalytic mechanism. At Thr-180 the chain carries Phosphothreonine; by MAP2K3, MAP2K4, MAP2K6 and MAP2K7. The short motif at 180-182 (TGY) is the TXY element. Tyr-182 bears the Phosphotyrosine; by MAP2K3, MAP2K4, MAP2K6 and MAP2K7 mark. Ser-350 is subject to Phosphoserine.

Belongs to the protein kinase superfamily. CMGC Ser/Thr protein kinase family. MAP kinase subfamily. Interacts with MAPK8IP2. Mg(2+) serves as cofactor. In terms of processing, dually phosphorylated on Thr-180 and Tyr-182 by MAP2K3/MKK3, MAP2K4/MKK4, MAP2K6/MKK6 and MAP2K7/MKK7, which activates the enzyme. Dephosphorylated by dual specificity phosphatase DUSP1. In terms of tissue distribution, expressed in testes, pancreas, small intestine, lung and kidney. Abundant in macrophages, also present in neutrophils, CD4+ T-cells, and endothelial cells.

The enzyme catalyses L-seryl-[protein] + ATP = O-phospho-L-seryl-[protein] + ADP + H(+). It catalyses the reaction L-threonyl-[protein] + ATP = O-phospho-L-threonyl-[protein] + ADP + H(+). Its activity is regulated as follows. Activated by phosphorylation on threonine and tyrosine by dual specificity kinases, MAP2K3/MKK3, MAP2K6/MKK6, MAP2K4/MKK4 and MAP2K7/MKK7. Activation by ultraviolet radiation, hyperosmotic shock, anisomycin or by TNF-alpha is mediated by MAP2K3/MKK3. Inhibited by dual specificity phosphatase DUSP1. Serine/threonine kinase which acts as an essential component of the MAP kinase signal transduction pathway. MAPK13 is one of the four p38 MAPKs which play an important role in the cascades of cellular responses evoked by extracellular stimuli such as pro-inflammatory cytokines or physical stress leading to direct activation of transcription factors such as ELK1 and ATF2. Accordingly, p38 MAPKs phosphorylate a broad range of proteins and it has been estimated that they may have approximately 200 to 300 substrates each. MAPK13 is one of the less studied p38 MAPK isoforms. Some of the targets are downstream kinases such as MAPKAPK2, which are activated through phosphorylation and further phosphorylate additional targets. Plays a role in the regulation of protein translation by phosphorylating and inactivating EEF2K. Involved in cytoskeletal remodeling through phosphorylation of MAPT and STMN1. Mediates UV irradiation induced up-regulation of the gene expression of CXCL14. Plays an important role in the regulation of epidermal keratinocyte differentiation, apoptosis and skin tumor development. Phosphorylates the transcriptional activator MYB in response to stress which leads to rapid MYB degradation via a proteasome-dependent pathway. MAPK13 also phosphorylates and down-regulates PRKD1 during regulation of insulin secretion in pancreatic beta cells. This Homo sapiens (Human) protein is Mitogen-activated protein kinase 13 (MAPK13).